A 336-amino-acid chain; its full sequence is Ribosomal RNA large subunit methyltransferase F (336 aa).

Residues His-212–Ser-231 are compositionally biased toward basic residues. The segment at His-212 to Met-234 is disordered.

Belongs to the methyltransferase superfamily. METTL16/RlmF family.

It is found in the cytoplasm. It catalyses the reaction adenosine(1618) in 23S rRNA + S-adenosyl-L-methionine = N(6)-methyladenosine(1618) in 23S rRNA + S-adenosyl-L-homocysteine + H(+). Functionally, specifically methylates the adenine in position 1618 of 23S rRNA. The sequence is that of Ribosomal RNA large subunit methyltransferase F from Methylobacillus flagellatus (strain ATCC 51484 / DSM 6875 / VKM B-1610 / KT).